The following is a 438-amino-acid chain: MFLPQEFIRQKRNRQALDRDGIAAFVRGVTDGSVTEGQVAAFAMAVYFNDLSTDERVALTLAQRDSGDVLDWHALELDGPVIDKHSTGGVGDVVSLMLGPMVAACGGYVPMISGRGLGHTGGTLDKLSAIPGYNVTPDTDAFRRAVRDVGVAIIGQTARLAPADMRIYAIRDVTATVESVAMITASILSKKLAAGLDGLVMDVKVGSGAFMPTAEQSAELARSIVDVGNGAGMKTTAILTDMNQSLAPCAGNALEVACAIDYLTGKSRPARLHDVTMALSAELLVTGGLAHDVADARAKLLRALDSGAAAERFARMVTALGGPADLIDAPARHLARAKVVVPVPARASGVVQRVDCRALGLAVVALGGGRTRAADAIDYSVGLTALAEIGQRVEADQPLGYVHARDAAAAAHAVDTIQRSYVLGEAGDAPPTIYQQIG.

This sequence belongs to the thymidine/pyrimidine-nucleoside phosphorylase family. Homodimer.

The enzyme catalyses thymidine + phosphate = 2-deoxy-alpha-D-ribose 1-phosphate + thymine. Its pathway is pyrimidine metabolism; dTMP biosynthesis via salvage pathway; dTMP from thymine: step 1/2. Functionally, the enzymes which catalyze the reversible phosphorolysis of pyrimidine nucleosides are involved in the degradation of these compounds and in their utilization as carbon and energy sources, or in the rescue of pyrimidine bases for nucleotide synthesis. The protein is Thymidine phosphorylase of Burkholderia lata (strain ATCC 17760 / DSM 23089 / LMG 22485 / NCIMB 9086 / R18194 / 383).